A 468-amino-acid chain; its full sequence is 3-isopropylmalate dehydratase large subunit (468 aa).

Residues Cys347, Cys407, and Cys410 each contribute to the [4Fe-4S] cluster site. Residues 424 to 441 show a composition bias toward polar residues; it reads SASSSNRNFKGRQGSPSG. The disordered stretch occupies residues 424 to 443; that stretch reads SASSSNRNFKGRQGSPSGRT.

This sequence belongs to the aconitase/IPM isomerase family. LeuC type 1 subfamily. As to quaternary structure, heterodimer of LeuC and LeuD. The cofactor is [4Fe-4S] cluster.

It catalyses the reaction (2R,3S)-3-isopropylmalate = (2S)-2-isopropylmalate. It participates in amino-acid biosynthesis; L-leucine biosynthesis; L-leucine from 3-methyl-2-oxobutanoate: step 2/4. Functionally, catalyzes the isomerization between 2-isopropylmalate and 3-isopropylmalate, via the formation of 2-isopropylmaleate. This is 3-isopropylmalate dehydratase large subunit from Prochlorococcus marinus (strain MIT 9215).